A 100-amino-acid chain; its full sequence is Aspartyl/glutamyl-tRNA(Asn/Gln) amidotransferase subunit C (100 aa).

The protein belongs to the GatC family. As to quaternary structure, heterotrimer of A, B and C subunits.

It catalyses the reaction L-glutamyl-tRNA(Gln) + L-glutamine + ATP + H2O = L-glutaminyl-tRNA(Gln) + L-glutamate + ADP + phosphate + H(+). It carries out the reaction L-aspartyl-tRNA(Asn) + L-glutamine + ATP + H2O = L-asparaginyl-tRNA(Asn) + L-glutamate + ADP + phosphate + 2 H(+). Its function is as follows. Allows the formation of correctly charged Asn-tRNA(Asn) or Gln-tRNA(Gln) through the transamidation of misacylated Asp-tRNA(Asn) or Glu-tRNA(Gln) in organisms which lack either or both of asparaginyl-tRNA or glutaminyl-tRNA synthetases. The reaction takes place in the presence of glutamine and ATP through an activated phospho-Asp-tRNA(Asn) or phospho-Glu-tRNA(Gln). The chain is Aspartyl/glutamyl-tRNA(Asn/Gln) amidotransferase subunit C from Rickettsia rickettsii (strain Sheila Smith).